The sequence spans 96 residues: Co-chaperonin GroES (96 aa).

The interval 26–48 (LLPGSAQEKPSQGEVLATGNGQI) is disordered.

Belongs to the GroES chaperonin family. Heptamer of 7 subunits arranged in a ring. Interacts with the chaperonin GroEL.

It is found in the cytoplasm. Together with the chaperonin GroEL, plays an essential role in assisting protein folding. The GroEL-GroES system forms a nano-cage that allows encapsulation of the non-native substrate proteins and provides a physical environment optimized to promote and accelerate protein folding. GroES binds to the apical surface of the GroEL ring, thereby capping the opening of the GroEL channel. This is Co-chaperonin GroES from Psychrobacter arcticus (strain DSM 17307 / VKM B-2377 / 273-4).